Reading from the N-terminus, the 679-residue chain is Protein hook (679 aa).

The segment at 1–155 (MSAPKNEMYY…NIMRALQELE (155 aa)) is interaction with microtubules. The 118-residue stretch at 6-123 (NEMYYSLLEW…RLLQLVLGCA (118 aa)) folds into the Calponin-homology (CH) domain. Coiled-coil stretches lie at residues 135–437 (EIMC…LKCG) and 480–574 (QTAL…QEIL).

It belongs to the hook family. In terms of assembly, homodimer. Interacts with microtubules via its N-terminus.

Its subcellular location is the cytoplasm. The protein localises to the cytoskeleton. It localises to the endosome. The protein resides in the synapse. In terms of biological role, involved in endocytic trafficking by stabilizing organelles of the endocytic pathway. Probably acts as a cytoskeletal linker protein required to tether endosome vesicles to the cytoskeleton. Involved in modulation of endocytosis at stages required for down-regulation of membrane proteins that control synapse size. Not involved in synaptic vesicle recycling. Required in R7 cells for boss endocytosis into multivesicular bodies (MVBs). Has a role in regulating adult longevity. The sequence is that of Protein hook from Drosophila melanogaster (Fruit fly).